Reading from the N-terminus, the 414-residue chain is Ribulose bisphosphate carboxylase large chain (414 aa).

2 residues coordinate substrate: Asn-100 and Thr-150. Lys-152 acts as the Proton acceptor in catalysis. Substrate is bound at residue Lys-154. Residues Lys-178, Asp-180, and Glu-181 each contribute to the Mg(2+) site. The residue at position 178 (Lys-178) is an N6-carboxylysine. Catalysis depends on His-271, which acts as the Proton acceptor. Residues Arg-272, His-304, and Ser-356 each contribute to the substrate site.

It belongs to the RuBisCO large chain family. Type I subfamily. Heterohexadecamer of 8 large chains and 8 small chains; disulfide-linked. The disulfide link is formed within the large subunit homodimers. It depends on Mg(2+) as a cofactor. Post-translationally, the disulfide bond which can form in the large chain dimeric partners within the hexadecamer appears to be associated with oxidative stress and protein turnover.

The protein localises to the plastid. It localises to the chloroplast. It carries out the reaction 2 (2R)-3-phosphoglycerate + 2 H(+) = D-ribulose 1,5-bisphosphate + CO2 + H2O. The catalysed reaction is D-ribulose 1,5-bisphosphate + O2 = 2-phosphoglycolate + (2R)-3-phosphoglycerate + 2 H(+). RuBisCO catalyzes two reactions: the carboxylation of D-ribulose 1,5-bisphosphate, the primary event in carbon dioxide fixation, as well as the oxidative fragmentation of the pentose substrate in the photorespiration process. Both reactions occur simultaneously and in competition at the same active site. This chain is Ribulose bisphosphate carboxylase large chain (rbcL), found in Blechnopsis orientalis (Fish fern).